The following is a 179-amino-acid chain: Protein Syd (179 aa).

This sequence belongs to the Syd family.

Its subcellular location is the cell inner membrane. Functionally, interacts with the SecY protein in vivo. May bind preferentially to an uncomplexed state of SecY, thus functioning either as a chelating agent for excess SecY in the cell or as a regulatory factor that negatively controls the translocase function. This Pseudoalteromonas translucida (strain TAC 125) protein is Protein Syd.